Reading from the N-terminus, the 116-residue chain is Large ribosomal subunit protein uL24c (116 aa).

The protein belongs to the universal ribosomal protein uL24 family. Part of the 50S ribosomal subunit.

It localises to the plastid. The protein localises to the chloroplast. In terms of biological role, one of two assembly initiator proteins, it binds directly to the 5'-end of the 23S rRNA, where it nucleates assembly of the 50S subunit. The protein is Large ribosomal subunit protein uL24c (rpl24) of Pyropia yezoensis (Susabi-nori).